The sequence spans 173 residues: Endoribonuclease YbeY (173 aa).

Positions 120, 124, and 130 each coordinate Zn(2+).

It belongs to the endoribonuclease YbeY family. The cofactor is Zn(2+).

The protein localises to the cytoplasm. Single strand-specific metallo-endoribonuclease involved in late-stage 70S ribosome quality control and in maturation of the 3' terminus of the 16S rRNA. This Kineococcus radiotolerans (strain ATCC BAA-149 / DSM 14245 / SRS30216) protein is Endoribonuclease YbeY.